Reading from the N-terminus, the 340-residue chain is DNA-directed RNA polymerase subunit alpha (340 aa).

The tract at residues 1 to 236 (MLSLSKNWNT…EQLQLFIAFE (236 aa)) is alpha N-terminal domain (alpha-NTD). Residues 251–340 (FSPYLLKRVD…LSKRYEDSYN (90 aa)) are alpha C-terminal domain (alpha-CTD).

Belongs to the RNA polymerase alpha chain family. Homodimer. The RNAP catalytic core consists of 2 alpha, 1 beta, 1 beta' and 1 omega subunit. When a sigma factor is associated with the core the holoenzyme is formed, which can initiate transcription.

It catalyses the reaction RNA(n) + a ribonucleoside 5'-triphosphate = RNA(n+1) + diphosphate. DNA-dependent RNA polymerase catalyzes the transcription of DNA into RNA using the four ribonucleoside triphosphates as substrates. The sequence is that of DNA-directed RNA polymerase subunit alpha from Rickettsia prowazekii (strain Madrid E).